Here is a 343-residue protein sequence, read N- to C-terminus: tRNA N6-adenosine threonylcarbamoyltransferase (343 aa).

Residues His111 and His115 each contribute to the Fe cation site. Substrate is bound by residues 133–137 (AVSGG), Asp166, Gly179, Asp183, and Asn273. Asp301 provides a ligand contact to Fe cation.

Belongs to the KAE1 / TsaD family. Fe(2+) serves as cofactor.

The protein resides in the cytoplasm. The catalysed reaction is L-threonylcarbamoyladenylate + adenosine(37) in tRNA = N(6)-L-threonylcarbamoyladenosine(37) in tRNA + AMP + H(+). In terms of biological role, required for the formation of a threonylcarbamoyl group on adenosine at position 37 (t(6)A37) in tRNAs that read codons beginning with adenine. Is involved in the transfer of the threonylcarbamoyl moiety of threonylcarbamoyl-AMP (TC-AMP) to the N6 group of A37, together with TsaE and TsaB. TsaD likely plays a direct catalytic role in this reaction. This chain is tRNA N6-adenosine threonylcarbamoyltransferase, found in Geotalea uraniireducens (strain Rf4) (Geobacter uraniireducens).